The following is a 3122-amino-acid chain: DNA polymerase zeta catalytic subunit (3122 aa).

Disordered regions lie at residues 270–289 (QRRR…SQDC), 425–457 (GYQG…NEPQ), 487–509 (LCRN…EMEW), 524–545 (LDGT…RAHS), and 842–886 (TSTK…TFEN). Polar residues predominate over residues 277 to 286 (ESSQISQPES). Acidic residues predominate over residues 497–509 (EEDDSSSEEEMEW). Composition is skewed to polar residues over residues 533 to 545 (DNPL…RAHS) and 842 to 860 (TSTK…THND). At Ser1029 the chain carries Phosphoserine. Disordered stretches follow at residues 1034-1075 (YPIY…TLSF), 1154-1285 (VYNT…PTGI), 1429-1453 (VSVS…ESQT), 1538-1616 (KAQS…LSDD), 1842-1869 (NDVL…SFTP), 1959-1979 (NPRP…ESSN), and 2091-2138 (AAVP…RHSS). Position 1040 is a phosphothreonine (Thr1040). Composition is skewed to basic residues over residues 1042-1063 (KKSH…KQHR) and 1166-1179 (KASR…KSKA). Residues 1215–1239 (RANEKSLSRKHAIPADEKMKPHSEA) are compositionally biased toward basic and acidic residues. Positions 1243-1270 (PNHQSVSELTSSSGAQALSKQKEMSQTG) are enriched in polar residues. Residues 1429 to 1440 (VSVSEQSKTSET) are compositionally biased toward low complexity. Composition is skewed to polar residues over residues 1441 to 1453 (CSPG…ESQT) and 1538 to 1561 (KAQS…ISVS). The segment covering 1566 to 1587 (KANKRTRPVTSPRKPRTPRRTK) has biased composition (basic residues). Positions 1588-1598 (PKEQTPRRLKV) are enriched in basic and acidic residues. A compositionally biased stretch (polar residues) spans 1602-1615 (NLQTSGHLDNSLSD). The segment at 1844–1895 (VLTPTPDSSPRSTSSPLQSKNGSFTPRTAHILKPLMSPPSREEIVATLLDHD) is mediates interaction with MAD2L2. A compositionally biased stretch (low complexity) spans 1846 to 1859 (TPTPDSSPRSTSSP). Over residues 1860–1869 (LQSKNGSFTP) the composition is skewed to polar residues. Ser1964 bears the Phosphoserine mark. Cys3034, Cys3037, Cys3046, and Cys3049 together coordinate Zn(2+). A CysA-type zinc finger spans residues 3034 to 3049 (CPVCDDLTQHGICSKC). Residues Cys3078, Cys3081, Cys3091, and Cys3096 each contribute to the [4Fe-4S] cluster site. The CysB motif signature appears at 3078 to 3096 (CRNCTGSFDRHIPCVSLNC).

Belongs to the DNA polymerase type-B family. As to quaternary structure, heterodimer with MAD2L2. This dimer forms the minimal DNA polymerase zeta complex (Pol-zeta2), with REV3L bearing DNA polymerase catalytic activity, although its activity is very low in this context. Component of the tetrameric Pol-zeta complex (Pol-zeta4), which consists of REV3L, MAD2L2, POLD2 and POLD3; Pol-zeta4 is the fully active form of DNA polymerase zeta. [4Fe-4S] cluster is required as a cofactor.

The protein localises to the nucleus. The enzyme catalyses DNA(n) + a 2'-deoxyribonucleoside 5'-triphosphate = DNA(n+1) + diphosphate. In terms of biological role, catalytic subunit of the DNA polymerase zeta complex, an error-prone polymerase specialized in translesion DNA synthesis (TLS). Lacks an intrinsic 3'-5' exonuclease activity and thus has no proofreading function. The sequence is that of DNA polymerase zeta catalytic subunit (Rev3l) from Mus musculus (Mouse).